The sequence spans 361 residues: D-alanine--D-alanine ligase (361 aa).

Residues 144 to 350 (KLCVSEAGIA…FPELCDRLLQ (207 aa)) enclose the ATP-grasp domain. 177–232 (PETLIYPVFVKPAHLGSSVGISKVSVQGELPEALAHACNLDTKVLIEQAMHGKEIE) is an ATP binding site. Residues Asp303, Glu317, and Asn319 each contribute to the Mg(2+) site.

The protein belongs to the D-alanine--D-alanine ligase family. Mg(2+) serves as cofactor. It depends on Mn(2+) as a cofactor.

The protein resides in the cytoplasm. It carries out the reaction 2 D-alanine + ATP = D-alanyl-D-alanine + ADP + phosphate + H(+). It participates in cell wall biogenesis; peptidoglycan biosynthesis. Its function is as follows. Cell wall formation. The polypeptide is D-alanine--D-alanine ligase (Chlorobium phaeovibrioides (strain DSM 265 / 1930) (Prosthecochloris vibrioformis (strain DSM 265))).